The sequence spans 1173 residues: WASH complex subunit 4 (1173 aa).

Ala-2 carries the N-acetylalanine modification. Phosphoserine is present on Ser-7. A coiled-coil region spans residues Gln-27–Val-56. Residues Lys-705–Lys-1173 are sufficient for interaction with WASHC5. The segment covering Ala-1141–Lys-1155 has biased composition (basic and acidic residues). The tract at residues Ala-1141–Lys-1173 is disordered. Thr-1154 carries the phosphothreonine modification.

It belongs to the SWIP family. Component of the WASH core complex also described as WASH regulatory complex (SHRC) composed of WASH (WASHC1, WASH2P or WASH3P), WASHC2 (WASHC2A or WASHC2C), WASHC3, WASHC4 and WASHC5. The WASH core complex associates via WASHC2 with the F-actin-capping protein dimer (formed by CAPZA1, CAPZA2 or CAPZA3 and CAPZB) in a transient or substoichiometric manner which was initially described as WASH complex.

Its subcellular location is the early endosome. Functionally, acts as a component of the WASH core complex that functions as a nucleation-promoting factor (NPF) at the surface of endosomes, where it recruits and activates the Arp2/3 complex to induce actin polymerization, playing a key role in the fission of tubules that serve as transport intermediates during endosome sorting. In Mus musculus (Mouse), this protein is WASH complex subunit 4.